The primary structure comprises 259 residues: Leucine-rich repeat-containing protein 61 (259 aa).

4 LRR repeats span residues 32–53, 54–75, 76–97, and 98–119; these read SILL…GECL, GLEW…ASLR, QLAV…ATCE, and NLQS…QCLA. Residues 138 to 178 form the LRRCT domain; that stretch reads NPLCANPSYWAAVRELLPGLKVIDGERVIGRGSEFYQLCRD.

In Homo sapiens (Human), this protein is Leucine-rich repeat-containing protein 61 (LRRC61).